We begin with the raw amino-acid sequence, 1190 residues long: Serine/threonine-protein kinase N (1190 aa).

REM-1 domains lie at 28–102 (NLPE…QILL), 142–219 (ALEG…NREQ), and 242–322 (SSQP…ELPA). The C2 domain maps to 359 to 515 (LGGKPYQSVS…MALQLEPQGL (157 aa)). Positions 395–404 (PGRSRRDKDN) are enriched in basic and acidic residues. Disordered regions lie at residues 395–415 (PGRS…RSFV), 572–715 (HVHM…PPPP), 757–787 (PATP…QPPQ), and 811–832 (SPSS…RNVA). 2 stretches are compositionally biased toward low complexity: residues 576–588 (GSAG…TGSS) and 767–787 (AAAG…QPPQ). One can recognise a Protein kinase domain in the interval 863-1122 (FRLLSVLGRG…AEDVKKQAFF (260 aa)). Residues 869–877 (LGRGHFGKV) and lysine 892 contribute to the ATP site. The active-site Proton acceptor is the aspartate 988. Positions 1123-1190 (RSIVWDDLLL…QDFSYTAEWC (68 aa)) constitute an AGC-kinase C-terminal domain.

This sequence belongs to the protein kinase superfamily. Ser/Thr protein kinase family. Interacts (via N-terminus) with Rho1 (via REM repeats), Rac1 (via REM 1 repeat) and Rac2. In terms of processing, phosphorylated. Autophosphorylated; autophosphorylation is stimulated by GTP-bound Rho/Rac GTPases.

It localises to the cytoplasm. Its subcellular location is the nucleus. It is found in the membrane. The protein localises to the cell projection. The protein resides in the lamellipodium. It localises to the cytoskeleton. Its subcellular location is the cleavage furrow. It is found in the midbody. The protein localises to the cell junction. It carries out the reaction L-seryl-[protein] + ATP = O-phospho-L-seryl-[protein] + ADP + H(+). The enzyme catalyses L-threonyl-[protein] + ATP = O-phospho-L-threonyl-[protein] + ADP + H(+). Activated by lipids, particularly cardiolipin and to a lesser extent by other acidic phospholipids and unsaturated fatty acids. Two specific sites, Thr-1022 (activation loop of the kinase domain) and Thr-1164 (turn motif), may be needed to be phosphorylated for its full activation. Kinase activity is activated upon binding to GTP-bound Rho/Rac GTPases. Pkc-related serine/threonine-protein kinase and Rho/Rac effector protein that participates in specific signal transduction responses in the cell. May play a role in the regulation of cell cycle progression, actin cytoskeleton assembly, cell migration, cell adhesion and transcription activation signaling processes. Plays a role in regulating Rho-mediated dorsal closure during embryogenesis. In Drosophila melanogaster (Fruit fly), this protein is Serine/threonine-protein kinase N (Pkn).